The primary structure comprises 202 residues: Imidazoleglycerol-phosphate dehydratase (202 aa).

Belongs to the imidazoleglycerol-phosphate dehydratase family.

The protein localises to the cytoplasm. It carries out the reaction D-erythro-1-(imidazol-4-yl)glycerol 3-phosphate = 3-(imidazol-4-yl)-2-oxopropyl phosphate + H2O. The protein operates within amino-acid biosynthesis; L-histidine biosynthesis; L-histidine from 5-phospho-alpha-D-ribose 1-diphosphate: step 6/9. This is Imidazoleglycerol-phosphate dehydratase from Corynebacterium glutamicum (strain ATCC 13032 / DSM 20300 / JCM 1318 / BCRC 11384 / CCUG 27702 / LMG 3730 / NBRC 12168 / NCIMB 10025 / NRRL B-2784 / 534).